A 484-amino-acid polypeptide reads, in one-letter code: Probable efflux pump outer membrane protein TtgC (484 aa).

The N-terminal stretch at 1-17 (MTKSLLSLAVTAFILGG) is a signal peptide. Residue Cys18 is the site of N-palmitoyl cysteine attachment. Cys18 carries S-diacylglycerol cysteine lipidation.

This sequence belongs to the outer membrane factor (OMF) (TC 1.B.17) family.

Its subcellular location is the cell outer membrane. In terms of biological role, probable outer membrane component of the TtgABC efflux pump with unknown specificity. This is Probable efflux pump outer membrane protein TtgC (ttgC) from Pseudomonas putida (strain ATCC 47054 / DSM 6125 / CFBP 8728 / NCIMB 11950 / KT2440).